The sequence spans 379 residues: Homoserine O-succinyltransferase (379 aa).

The 310-residue stretch at 48–357 (NAVLICHALS…SAHGHDAFLM (310 aa)) folds into the AB hydrolase-1 domain. The active-site Nucleophile is Ser154. Residue Arg224 coordinates substrate. Active-site residues include Asp319 and His352. Asp353 lines the substrate pocket.

This sequence belongs to the AB hydrolase superfamily. MetX family. As to quaternary structure, homodimer.

The protein resides in the cytoplasm. The catalysed reaction is L-homoserine + succinyl-CoA = O-succinyl-L-homoserine + CoA. It participates in amino-acid biosynthesis; L-methionine biosynthesis via de novo pathway; O-succinyl-L-homoserine from L-homoserine: step 1/1. In terms of biological role, transfers a succinyl group from succinyl-CoA to L-homoserine, forming succinyl-L-homoserine. This Neisseria meningitidis serogroup A / serotype 4A (strain DSM 15465 / Z2491) protein is Homoserine O-succinyltransferase.